The following is a 71-amino-acid chain: Large ribosomal subunit protein uL30 (71 aa).

This sequence belongs to the universal ribosomal protein uL30 family. In terms of assembly, part of the 50S ribosomal subunit.

The protein is Large ribosomal subunit protein uL30 of Borreliella burgdorferi (strain ATCC 35210 / DSM 4680 / CIP 102532 / B31) (Borrelia burgdorferi).